The chain runs to 393 residues: Stimulated by retinoic acid gene 8 protein (393 aa).

Residues 1–11 (MATPGEGNQPS) show a composition bias toward polar residues. A disordered region spans residues 1-25 (MATPGEGNQPSDDGAPQPLAQLQKL). The Nuclear localization signal (NLS) signature appears at 28 to 33 (RVVRRR). Residues 66–95 (QVLNRTKIHIQEQEESLDKLLKLKASFNLQ) are a coiled coil. The segment at 124–201 (FLQDSPPEWF…EEKKVDLSHS (78 aa)) is disordered. Acidic residues predominate over residues 141–192 (DAEEEGEEEGEEEGEEGEEEEEGDEEGEEEEENGEEREVEEYQEEEEEEEEE). A Nuclear export signal (NES) motif is present at residues 209-218 (LMEFERYLNF).

Interacts with XPO1. Interacts with MEIOSIN. Post-translationally, phosphorylated in P19 EC cells. In terms of tissue distribution, expressed exclusively in premeiotic germ cells in both sexes. In females, is expressed in the embryonic ovary. In males, is expressed in pubertal and adult testes, in premeiotic spermatogenic cells. Expressed by some type A and B spermatogonia, preleptotene spermatocytes, and early leptotene spermatocytes (at protein level). Expression begins in late undifferentiated spermatogonia and persists during differentiating spermatogonia (at protein level).

The protein resides in the cytoplasm. It localises to the nucleus. Meiosis-inducer required for the transition into meiosis for both female and male germ cells. In female germ cells, acts downstream of ZGLP1 as a key effector of the meiotic program: required for premeiotic DNA replication and subsequent events in meiotic prophase. During spermatogenesis, next to its role in meiotic initiation, promotes (but is not required for) spermatogonial differentiation. In complex with MEIOSIN, directly activates the transcription of a subset of critical meiotic genes playing a central role in cell-cycle switching from mitosis to meiosis. The polypeptide is Stimulated by retinoic acid gene 8 protein (Mus musculus (Mouse)).